Consider the following 156-residue polypeptide: 6,7-dimethyl-8-ribityllumazine synthase (156 aa).

Residues phenylalanine 23, 57–59 (AYE), and 81–83 (AII) contribute to the 5-amino-6-(D-ribitylamino)uracil site. 86-87 (GT) contributes to the (2S)-2-hydroxy-3-oxobutyl phosphate binding site. The Proton donor role is filled by histidine 89. Phenylalanine 114 contacts 5-amino-6-(D-ribitylamino)uracil. Arginine 128 is a binding site for (2S)-2-hydroxy-3-oxobutyl phosphate.

This sequence belongs to the DMRL synthase family.

The catalysed reaction is (2S)-2-hydroxy-3-oxobutyl phosphate + 5-amino-6-(D-ribitylamino)uracil = 6,7-dimethyl-8-(1-D-ribityl)lumazine + phosphate + 2 H2O + H(+). Its pathway is cofactor biosynthesis; riboflavin biosynthesis; riboflavin from 2-hydroxy-3-oxobutyl phosphate and 5-amino-6-(D-ribitylamino)uracil: step 1/2. In terms of biological role, catalyzes the formation of 6,7-dimethyl-8-ribityllumazine by condensation of 5-amino-6-(D-ribitylamino)uracil with 3,4-dihydroxy-2-butanone 4-phosphate. This is the penultimate step in the biosynthesis of riboflavin. This Helicobacter pylori (strain G27) protein is 6,7-dimethyl-8-ribityllumazine synthase.